We begin with the raw amino-acid sequence, 172 residues long: Adenine phosphoribosyltransferase (172 aa).

This sequence belongs to the purine/pyrimidine phosphoribosyltransferase family. Homodimer.

The protein localises to the cytoplasm. The enzyme catalyses AMP + diphosphate = 5-phospho-alpha-D-ribose 1-diphosphate + adenine. Its pathway is purine metabolism; AMP biosynthesis via salvage pathway; AMP from adenine: step 1/1. In terms of biological role, catalyzes a salvage reaction resulting in the formation of AMP, that is energically less costly than de novo synthesis. The sequence is that of Adenine phosphoribosyltransferase from Roseiflexus castenholzii (strain DSM 13941 / HLO8).